Reading from the N-terminus, the 145-residue chain is 3-dehydroquinate dehydratase (145 aa).

The Proton acceptor role is filled by Y23. The substrate site is built by N74, H80, and D87. The active-site Proton donor is H100. Residues 101-102 and R111 each bind substrate; that span reads IS.

Belongs to the type-II 3-dehydroquinase family. Homododecamer.

It catalyses the reaction 3-dehydroquinate = 3-dehydroshikimate + H2O. The protein operates within metabolic intermediate biosynthesis; chorismate biosynthesis; chorismate from D-erythrose 4-phosphate and phosphoenolpyruvate: step 3/7. Functionally, catalyzes a trans-dehydration via an enolate intermediate. The protein is 3-dehydroquinate dehydratase of Mycobacterium leprae (strain Br4923).